Here is a 92-residue protein sequence, read N- to C-terminus: Small ribosomal subunit protein uS19 (92 aa).

It belongs to the universal ribosomal protein uS19 family.

Functionally, protein S19 forms a complex with S13 that binds strongly to the 16S ribosomal RNA. The protein is Small ribosomal subunit protein uS19 of Desulfosudis oleivorans (strain DSM 6200 / JCM 39069 / Hxd3) (Desulfococcus oleovorans).